A 402-amino-acid polypeptide reads, in one-letter code: Queuine tRNA-ribosyltransferase-like protein (402 aa).

It belongs to the queuine tRNA-ribosyltransferase family.

The sequence is that of Queuine tRNA-ribosyltransferase-like protein from Theileria annulata.